Reading from the N-terminus, the 93-residue chain is Acylphosphatase (93 aa).

One can recognise an Acylphosphatase-like domain in the interval 5 to 93; that stretch reads TAILRVTGFV…EERKTFDIVY (89 aa). Active-site residues include R20 and N38.

Belongs to the acylphosphatase family.

The catalysed reaction is an acyl phosphate + H2O = a carboxylate + phosphate + H(+). This Listeria monocytogenes serotype 4b (strain F2365) protein is Acylphosphatase (acyP).